The sequence spans 252 residues: Zinc import ATP-binding protein ZnuC (252 aa).

An ABC transporter domain is found at 5 to 220; the sequence is VTLNKISVTF…PEFIAMFGQR (216 aa). 37-44 contacts ATP; that stretch reads GPNGAGKS.

The protein belongs to the ABC transporter superfamily. Zinc importer (TC 3.A.1.15.5) family. In terms of assembly, the complex is composed of two ATP-binding proteins (ZnuC), two transmembrane proteins (ZnuB) and a solute-binding protein (ZnuA).

The protein localises to the cell inner membrane. It carries out the reaction Zn(2+)(out) + ATP(in) + H2O(in) = Zn(2+)(in) + ADP(in) + phosphate(in) + H(+)(in). Functionally, part of the ABC transporter complex ZnuABC involved in zinc import. Responsible for energy coupling to the transport system. The protein is Zinc import ATP-binding protein ZnuC of Yersinia enterocolitica serotype O:8 / biotype 1B (strain NCTC 13174 / 8081).